We begin with the raw amino-acid sequence, 123 residues long: Gamma-synuclein (123 aa).

2 repeat units span residues 20 to 30 (EKTKQGVTEAA) and 31 to 41 (EKTKEGVMYVG). Residues 20–67 (EKTKQGVTEAAEKTKEGVMYVGTKTKENVVQSVTSVAEKTKEQANAVS) are 4 X 11 AA tandem repeats of [EGSA]-K-T-K-[EQ]-[GQ]-V-X(4). One copy of the 3; approximate repeat lies at 42–56 (TKTKENVVQSVTSVA). Copy 4 of the repeat occupies 57–67 (EKTKEQANAVS). 2 positions are modified to phosphoserine: Ser-67 and Ser-72. Residues 91-123 (TTGVVRKEDLEPPAQDQEAKEQEENEEAKSGED) are disordered. Residues 107 to 123 (QEAKEQEENEEAKSGED) show a composition bias toward basic and acidic residues. Ser-120 bears the Phosphoserine; by BARK1, CaMK2 and CK2 mark.

It belongs to the synuclein family. In terms of assembly, may be a centrosome-associated protein. Interacts with MYOC; affects its secretion and its aggregation. Phosphorylated. Phosphorylation by GRK5 appears to occur on residues distinct from the residue phosphorylated by other kinases. As to expression, highly expressed in brain, particularly in the substantia nigra. Also expressed in the corpus callosum, heart, skeletal muscle, ovary, testis, colon and spleen. Weak expression in pancreas, kidney and lung. Expressed predominantly in the cell bodies and axons of primary sensory neurons, sympathetic neurons and motoneurons.

It localises to the cytoplasm. It is found in the perinuclear region. The protein resides in the cytoskeleton. Its subcellular location is the microtubule organizing center. The protein localises to the centrosome. It localises to the spindle. Its function is as follows. Plays a role in neurofilament network integrity. May be involved in modulating axonal architecture during development and in the adult. In vitro, increases the susceptibility of neurofilament-H to calcium-dependent proteases. May also function in modulating the keratin network in skin. Activates the MAPK and Elk-1 signal transduction pathway. This is Gamma-synuclein (Sncg) from Mus musculus (Mouse).